Reading from the N-terminus, the 220-residue chain is Ras-related protein Rab-3A (220 aa).

11 residues coordinate GTP: Ser31, Ser32, Val33, Gly34, Lys35, Thr36, Ser37, Thr48, Pro49, Ser53, and Thr54. Residue Thr36 participates in Mg(2+) binding. Residues 49–58 carry the Switch 1 motif; sequence PAFVSTVGID. Mg(2+) is bound by residues Thr54 and Asp77. Gly80 contacts GTP. Positions 80-96 match the Switch 2 motif; the sequence is GQERYRTITTAYYRGAM. A Phosphothreonine modification is found at Thr86. Asn135, Lys136, Asp138, Ala166, and Lys167 together coordinate GTP. Ser188 and Ser190 each carry phosphoserine. The disordered stretch occupies residues 194–220; it reads ADPAVTGAKQGPQLTDQQAPPHQDCAC. 2 S-geranylgeranyl cysteine lipidation sites follow: Cys218 and Cys220. Residue Cys220 is modified to Cysteine methyl ester.

Belongs to the small GTPase superfamily. Rab family. As to quaternary structure, interacts with RIMS1 and RIMS2. Interacts with Rabphilin-3A/RPH3A and Rab effector Noc2/RPH3AL. Interacts with SYTL4. Interacts with RAB3IP. Interacts with SGSM1 and SGSM3. Interacts with SYT1. Interacts with MYH9; this interaction is essential for lysosome exocytosis and plasma membrane repair. Interacts with STXBP1; this interaction promotes RAB3A dissociation from the vesicle membrane. Interacts with SNCA. Interacts with GDI1, GDI2, CHM and CHML; phosphorylation at Thr-86 disrupts these interactions. Interacts with MADD (via uDENN domain); the GTP-bound form is preferred for interaction. Mg(2+) serves as cofactor. Phosphorylation of Thr-86 in the switch II region by LRRK2 prevents the association of RAB regulatory proteins, including CHM, CHML and RAB GDP dissociation inhibitors GDI1 and GDI2. In terms of tissue distribution, specifically expressed in brain.

It is found in the cytoplasm. It localises to the cytosol. The protein resides in the lysosome. Its subcellular location is the cytoplasmic vesicle. The protein localises to the secretory vesicle. It is found in the cell projection. It localises to the axon. The protein resides in the cell membrane. Its subcellular location is the presynapse. The protein localises to the postsynapse. The catalysed reaction is GTP + H2O = GDP + phosphate + H(+). Regulated by guanine nucleotide exchange factors (GEFs) including RAB3IL1 and MADD which promote the exchange of bound GDP for free GTP. Regulated by GTPase activating proteins (GAPs) including RAB3GAP1 and TBC1D10B which increase the GTP hydrolysis activity. Inhibited by GDP dissociation inhibitors (GDIs) which prevent Rab-GDP dissociation. The small GTPases Rab are key regulators of intracellular membrane trafficking, from the formation of transport vesicles to their fusion with membranes. Rabs cycle between an inactive GDP-bound form and an active GTP-bound form that is able to recruit to membranes different sets of downstream effectors directly responsible for vesicle formation, movement, tethering and fusion. RAB3A plays a central role in regulated exocytosis and secretion. Controls the recruitment, tethering and docking of secretory vesicles to the plasma membrane. Upon stimulation, switches to its active GTP-bound form, cycles to vesicles and recruits effectors such as RIMS1, RIMS2, Rabphilin-3A/RPH3A, RPH3AL or SYTL4 to help the docking of vesicules onto the plasma membrane. Upon GTP hydrolysis by GTPase-activating protein, dissociates from the vesicle membrane allowing the exocytosis to proceed. Stimulates insulin secretion through interaction with RIMS2 or RPH3AL effectors in pancreatic beta cells. Regulates calcium-dependent lysosome exocytosis and plasma membrane repair (PMR) via the interaction with 2 effectors, SYTL4 and myosin-9/MYH9. Acts as a positive regulator of acrosome content secretion in sperm cells by interacting with RIMS1. Also plays a role in the regulation of dopamine release by interacting with synaptotagmin I/SYT. This Bos taurus (Bovine) protein is Ras-related protein Rab-3A (RAB3A).